A 40-amino-acid chain; its full sequence is Potassium channel toxin alpha-KTx 12.3 (40 aa).

Intrachain disulfides connect C2–C5, C10–C31, C16–C36, and C20–C38.

Expressed by the venom gland.

Its subcellular location is the secreted. Functionally, inhibits high conductance calcium-activated potassium channels (KCNMA). Inhibits Shaker B potassium channels. This chain is Potassium channel toxin alpha-KTx 12.3, found in Tityus costatus (Brazilian scorpion).